Reading from the N-terminus, the 855-residue chain is Protein KRI1 homolog (855 aa).

Disordered stretches follow at residues 47-67, 82-117, 130-196, 312-342, 424-453, and 589-855; these read VSES…VDPK, KDPC…KAKP, EHNG…KTKE, SLRR…MKEL, YDPR…CDYD, and KSLY…KKDN. The segment covering 48-64 has biased composition (acidic residues); that stretch reads SESEFDSDSSSSEEDEV. Over residues 82–91 the composition is skewed to basic and acidic residues; sequence KDPCIYDKGT. Phosphoserine is present on residues Ser-95, Ser-97, Ser-98, Ser-137, and Ser-138. Residues 160 to 176 show a composition bias toward basic and acidic residues; sequence EEERRLKAEFRKVMNKE. A Phosphoserine modification is found at Ser-179. The stretch at 307–362 forms a coiled coil; the sequence is RTIEQSLRRTDDKRKEKRKELKERKDQEKQQKMKELELVKEMKRKEIDEKIRKLKA. The span at 441-452 shows a compositional bias: acidic residues; that stretch reads CEDDDFNMDCDY. Residues 609–619 are compositionally biased toward low complexity; it reads VTPAEATAPAE. Residues 630-640 are compositionally biased toward basic residues; that stretch reads KSKRKRLKRKA. 2 stretches are compositionally biased toward basic and acidic residues: residues 650–664 and 674–692; these read VLKE…KEAD and SSKK…DANQ. Composition is skewed to polar residues over residues 720–748, 756–773, and 792–805; these read VQNG…TTES, SNGN…QQRQ, and ANGT…NQKP. Residues 812–826 show a composition bias toward low complexity; the sequence is KKTNNFKAKNKQNNN. Residues 842-855 show a composition bias toward basic residues; that stretch reads RKFHKREKYGKKDN.

Belongs to the KRI1 family.

This Drosophila melanogaster (Fruit fly) protein is Protein KRI1 homolog.